The primary structure comprises 661 residues: UvrABC system protein B (661 aa).

A Helicase ATP-binding domain is found at 23–180; the sequence is EGLQKGYRIQ…THLARIGYER (158 aa). 36-43 contacts ATP; the sequence is GVTGSGKT. Positions 89–112 match the Beta-hairpin motif; sequence YYDYYQPEAYIPTRDLYIEKNADI. The region spanning 426-592 is the Helicase C-terminal domain; it reads QIDDLVNEIA…TIIKPLDEEI (167 aa). The UVR domain maps to 620 to 655; that stretch reads EEYIALLEEEMYKAASELRYEDAARLRDELFNIREK.

It belongs to the UvrB family. In terms of assembly, forms a heterotetramer with UvrA during the search for lesions. Interacts with UvrC in an incision complex.

Its subcellular location is the cytoplasm. In terms of biological role, the UvrABC repair system catalyzes the recognition and processing of DNA lesions. A damage recognition complex composed of 2 UvrA and 2 UvrB subunits scans DNA for abnormalities. Upon binding of the UvrA(2)B(2) complex to a putative damaged site, the DNA wraps around one UvrB monomer. DNA wrap is dependent on ATP binding by UvrB and probably causes local melting of the DNA helix, facilitating insertion of UvrB beta-hairpin between the DNA strands. Then UvrB probes one DNA strand for the presence of a lesion. If a lesion is found the UvrA subunits dissociate and the UvrB-DNA preincision complex is formed. This complex is subsequently bound by UvrC and the second UvrB is released. If no lesion is found, the DNA wraps around the other UvrB subunit that will check the other stand for damage. The chain is UvrABC system protein B from Thermosipho africanus (strain TCF52B).